A 542-amino-acid chain; its full sequence is Probable quinate permease (542 aa).

Residues 1 to 22 (MSILALVEDRPTPKEVYNWKIY) lie on the Cytoplasmic side of the membrane. A helical membrane pass occupies residues 23–43 (LLAAVASFTSCMIGYDSAFIG). Residues 44–74 (TTLALSSFREEFGFSTMSKTAVNLVSANIVS) lie on the Extracellular side of the membrane. A helical transmembrane segment spans residues 75-95 (CYQAGAFFGAFFAYPIGHFWG). Residues 96 to 97 (RK) are Cytoplasmic-facing. A helical membrane pass occupies residues 98–118 (WGLLFAGTIFTLGAGLMLGAN). The Extracellular portion of the chain corresponds to 119–130 (GDRGLGLLYGGR). Residues 131-151 (VLAGLGVGAGSNITPIYISEM) form a helical membrane-spanning segment. Residues 152 to 159 (APPSIRGR) lie on the Cytoplasmic side of the membrane. A helical transmembrane segment spans residues 160-180 (LVGVYELGWQIGGLVGFWINY). At 181–193 (GVSETLAPSHKQW) the chain is on the extracellular side. A helical membrane pass occupies residues 194-214 (IIPFAVQLIPSGLLLIGAVFL). Residues 215-285 (KESPRWLFSR…AGTNKKVMYR (71 aa)) lie on the Cytoplasmic side of the membrane. The chain crosses the membrane as a helical span at residues 286 to 306 (LFLGSMLFFWQNGSGINAINY). The Extracellular segment spans residues 307–325 (YSPTVFKSIGLHGANTSMF). The chain crosses the membrane as a helical span at residues 326–346 (STGIFGVVKTVVTFVWLLYLI). Over 347–352 (DRLGRR) the chain is Cytoplasmic. A helical membrane pass occupies residues 353–373 (LLLLIGAAGAAVCLLIVGAYI). Topologically, residues 374–387 (KIADPASNPTQEMT) are extracellular. A helical transmembrane segment spans residues 388-408 (GGGIAAMFFFYLYTVFYTPSW). The Cytoplasmic segment spans residues 409 to 456 (NGTPWVMNSEMFEPNMRSLAQACAAASNWLWNFLISRFTPQMFAKMEY). Residues 457–477 (GVWFFFASLMLLSIVFVFFLV) traverse the membrane as a helical segment. At 478 to 542 (PETKGIPLES…EHVSEDLPKV (65 aa)) the chain is on the extracellular side. The segment at 523-542 (GYSKTGEQQVEHVSEDLPKV) is disordered. Over residues 531-542 (QVEHVSEDLPKV) the composition is skewed to basic and acidic residues.

The protein belongs to the major facilitator superfamily. Sugar transporter (TC 2.A.1.1) family. As to quaternary structure, interacts with creB. Post-translationally, ubiquitinated. Deubiquitinated by creB, probably to control its activity or amount.

The protein localises to the cell membrane. Functionally, integral membrane transporter that imports quinic acid to be catabolized as a carbon source. This is Probable quinate permease (qutD) from Aspergillus fumigatus (strain CBS 144.89 / FGSC A1163 / CEA10) (Neosartorya fumigata).